Reading from the N-terminus, the 138-residue chain is ATP synthase epsilon chain (138 aa).

Belongs to the ATPase epsilon chain family. As to quaternary structure, F-type ATPases have 2 components, CF(1) - the catalytic core - and CF(0) - the membrane proton channel. CF(1) has five subunits: alpha(3), beta(3), gamma(1), delta(1), epsilon(1). CF(0) has three main subunits: a, b and c.

It is found in the cellular thylakoid membrane. Its function is as follows. Produces ATP from ADP in the presence of a proton gradient across the membrane. In Microcystis aeruginosa (strain NIES-843 / IAM M-2473), this protein is ATP synthase epsilon chain.